A 335-amino-acid chain; its full sequence is Cathepsin B (335 aa).

The N-terminal stretch at 1 to 17 is a signal peptide; the sequence is MWRLLATLSCLLVLTSA. Residues 18–79 constitute a propeptide, activation peptide; that stretch reads RSSLYFPPLS…QRDAFAADVV (62 aa). Intrachain disulfides connect Cys-93–Cys-122, Cys-105–Cys-150, Cys-141–Cys-207, Cys-142–Cys-146, Cys-179–Cys-211, and Cys-187–Cys-198. Cys-108 is a catalytic residue. Asn-192 is a glycosylation site (N-linked (GlcNAc...) asparagine). Residue Lys-220 is modified to N6-acetyllysine. The cysteines at positions 227 and 331 are disulfide-linked. Residues His-278 and Asn-298 contribute to the active site. Positions 333 to 335 are excised as a propeptide; the sequence is HQY.

This sequence belongs to the peptidase C1 family. Dimer of a heavy chain and a light chain cross-linked by a disulfide bond. Interacts with SRPX2. Directly interacts with SHKBP1. In terms of tissue distribution, expressed in myoblasts, the myotube, fibroblasts and fetal muscle (at protein level). Expressed in the spleen (at protein level).

It is found in the lysosome. It localises to the melanosome. Its subcellular location is the secreted. The protein localises to the extracellular space. The protein resides in the apical cell membrane. It carries out the reaction Hydrolysis of proteins with broad specificity for peptide bonds. Preferentially cleaves -Arg-Arg-|-Xaa bonds in small molecule substrates (thus differing from cathepsin L). In addition to being an endopeptidase, shows peptidyl-dipeptidase activity, liberating C-terminal dipeptides.. Thiol protease which is believed to participate in intracellular degradation and turnover of proteins. Cleaves matrix extracellular phosphoglycoprotein MEPE. Involved in the solubilization of cross-linked TG/thyroglobulin in the thyroid follicle lumen. Has also been implicated in tumor invasion and metastasis. This Bos taurus (Bovine) protein is Cathepsin B (CTSB).